The sequence spans 571 residues: MDSGKSRSLETTVKRVYRDLLLPKINTSKKMSTLTNSPSSLEGTPGIKKNSGEMQAEASAERVKLTKSIKEKQNNELEKVALKRKADSEEKLVGKKEAKIMELDNQLVTTVPLPHIPLKNIMDVEMKLVYVDEEDVSYEFAQPNMCLGLQATGQTATTMPPASPRDLTTLPQIDKWLQVALKDASSCYRQKKYAVAAGQFRTALELCSKGAALGKPFEAHAEDIASIASFIETKLVTCYLRMRKPDLALNHAHRSIVLNPAYFRNHLRQAAVFRCLERYSEAARSAMIADYMFWLCGGSEHSVSKLIKLYWQAMIEEAITRAEAFSVMYTPFATRIKPENIEKVKEVFMRTHPTYVDCIYTDTQGLHVLPQTADWSCFPPQQYLLTLGFKNKEDGKFLEKVSSRKLPTYTEHKTPFSPLTREDTVRHMETVGKRILPILDFIRSTQLNGNFHACSGVMEKLHYASLLSRLQRVKEQAQVINQAMAELATVPYLQDISQQEAELLQSLMADAMDTLEGKKSDKERVWNTIQKVGRIEDFLYQLEDSFLKTKKLRTARRQKTKMKRLQTVQQN.

Residues Lys30–Glu42 are compositionally biased toward polar residues. Residues Lys30–Ala58 are disordered.

This sequence belongs to the SPATA16 family. Testis-specific. Expressed in spermatocytes and round and elongated spermatids in the seminiferous tubules.

It is found in the golgi apparatus. It localises to the cytoplasmic vesicle. Its subcellular location is the secretory vesicle. The protein resides in the acrosome. In terms of biological role, essential for spermiogenesis and male fertility. Involved in the formation of acrosome during spermatogenesis. The sequence is that of Spermatogenesis-associated protein 16 (Spata16) from Mus musculus (Mouse).